The chain runs to 579 residues: SHC-transforming protein 1 (579 aa).

Methionine 1 is subject to N-acetylmethionine. The segment at 1 to 137 is disordered; that stretch reads MDLLPPKPKY…QLGGEEWTRH (137 aa). Positions 16–44 are enriched in low complexity; the sequence is ESLSSLEEGASGSTPPEELPSPSASSLGP. Phosphoserine occurs at positions 36 and 139. N6-acetyllysine is present on lysine 154. The PID domain maps to 156-339; that stretch reads MGPGVSYLVR…AGFDGSAWDE (184 aa). Positions 337–357 are disordered; that stretch reads WDEEEEEPPDHQYYNDFPGKE. The interval 340-483 is CH1; the sequence is EEEEPPDHQY…SMAEQLQGEP (144 aa). Phosphotyrosine is present on residues tyrosine 349, tyrosine 350, and tyrosine 423. A disordered region spans residues 432–451; it reads ARQAGGGAGPPNPSLNGSAP. A Phosphoserine modification is found at serine 449. Residues 484–575 form the SH2 domain; that stretch reads WFHGKLSRRE…GSELCLQQPV (92 aa).

Interacts with CPNE3; this interaction may mediate the binding of CPNE3 with ERBB2. Interacts with the NPXY motif of tyrosine-phosphorylated IGF1R and INSR in vitro via the PID domain. Once activated, binds to GRB2. Interacts with tyrosine-phosphorylated DDR2 and CD3T. Interacts with the N-terminal region of APS. Interacts with GRB7 and KIT. Interacts with PTK2/FAK1. Interacts with phosphorylated LRP1 and IRS4. Interacts with FLT4 (tyrosine-phosphorylated). Interacts with PDGFRB (tyrosine-phosphorylated). Interacts with ERBB4. Interacts with TEK/TIE2 (tyrosine-phosphorylated). Interacts with ALK, GAB2, TRIM31, INPP5D/SHIP1 and INPPL1/SHIP2. Interacts with PTPN6/SHP (tyrosine phosphorylated). Identified in a complex containing FGFR4, NCAM1, CDH2, PLCG1, FRS2, SRC, SHC1, GAP43 and CTTN. Interacts with EPHB1 and GRB2; activates the MAPK/ERK cascade to regulate cell migration. Interacts with the Trk receptors NTRK1, NTRK2 and NTRK3; in a phosphotyrosine-dependent manner. Interacts with CEACAM1; this interaction is CEACAM1-phosphorylation-dependent and mediates interaction with EGFR or INSR resulting in decrease coupling of SHC1 to the MAPK3/ERK1-MAPK1/ERK2 pathway. Interacts (via PID domain) with PEAK1 (when phosphorylated at 'Tyr-1177'). Found in a complex with PPP1CA, PPP1CC, SHC1 and PEAK1. Phosphorylated in response to FLT4 signaling. Tyrosine phosphorylated by ligand-activated PDGFRB. May be tyrosine phosphorylated by activated PTK2/FAK1. Tyrosine phosphorylated by TEK/TIE2. Tyrosine phosphorylated by activated PTK2B/PYK2. Dephosphorylation by PTPN2 may regulate interaction with GRB2. Phosphorylated by activated epidermal growth factor receptor. Phosphorylated in response to KIT signaling. Isoform p47Shc and isoform p52Shc are phosphorylated on tyrosine residues of the Pro-rich domain. Isoform p66Shc is phosphorylated on Ser-36 by PRKCB upon treatment with insulin, hydrogen peroxide or irradiation with ultraviolet light. FLT3 signaling promotes tyrosine phosphorylation of isoform p47Shc and isoform p52Shc. Also tyrosine phosphorylated by ligand-activated ALK. Widely expressed. Expressed in neural stem cells but absent in mature neurons.

The protein localises to the cytoplasm. It is found in the cell junction. It localises to the focal adhesion. The protein resides in the mitochondrion matrix. Its subcellular location is the mitochondrion. Functionally, signaling adapter that couples activated growth factor receptors to signaling pathways. Participates in signaling downstream of the angiopoietin receptor TEK/TIE2, and plays a role in the regulation of endothelial cell migration and sprouting angiogenesis. Participates in a signaling cascade initiated by activated KIT and KITLG/SCF. Isoform p47Shc and isoform p52Shc, once phosphorylated, couple activated receptor kinases to Ras via the recruitment of the GRB2/SOS complex and are implicated in the cytoplasmic propagation of mitogenic signals. Isoform p47Shc and isoform p52 may thus function as initiators of the Ras signaling cascade in various non-neuronal systems. Isoform p66Shc does not mediate Ras activation, but is involved in signal transduction pathways that regulate the cellular response to oxidative stress and life span. Isoform p66Shc acts as a downstream target of the tumor suppressor p53 and is indispensable for the ability of stress-activated p53 to induce elevation of intracellular oxidants, cytochrome c release and apoptosis. The expression of isoform p66Shc has been correlated with life span. The protein is SHC-transforming protein 1 (Shc1) of Mus musculus (Mouse).